The following is a 125-amino-acid chain: Cyclin-dependent protein kinase inhibitor SMR16 (125 aa).

Probable cyclin-dependent protein kinase (CDK) inhibitor that functions as a repressor of mitosis in the endoreduplication cell cycle. The polypeptide is Cyclin-dependent protein kinase inhibitor SMR16 (Arabidopsis thaliana (Mouse-ear cress)).